Consider the following 190-residue polypeptide: UPF0301 protein PSPTO_5037 (190 aa).

It belongs to the UPF0301 (AlgH) family.

This is UPF0301 protein PSPTO_5037 from Pseudomonas syringae pv. tomato (strain ATCC BAA-871 / DC3000).